We begin with the raw amino-acid sequence, 194 residues long: Sigma factor AlgU negative regulatory protein (194 aa).

Residues Leu-89–Leu-105 traverse the membrane as a helical segment.

This sequence belongs to the RseA family.

It localises to the cell membrane. Its function is as follows. Negative regulator of the sigma factor AlgU. Plays a role in the differentiation of P.aeruginosa into the alginate-producing form. Inactivation of mucA causes a switch from the non-mucoid to mucoid state resulting in constitutive expression of alginate biosynthetic genes. The sequence is that of Sigma factor AlgU negative regulatory protein (mucA) from Pseudomonas aeruginosa (strain ATCC 15692 / DSM 22644 / CIP 104116 / JCM 14847 / LMG 12228 / 1C / PRS 101 / PAO1).